Consider the following 233-residue polypeptide: CDP-diacylglycerol--glycerol-3-phosphate 3-phosphatidyltransferase 2 (233 aa).

Residues 1–23 (MGEEDTATVDQNSFGGGKDSLLR) form a disordered region. Transmembrane regions (helical) follow at residues 40–60 (VITL…ILVA), 71–91 (TATT…GYIA), 100–120 (FGAF…LILL), 125–145 (MVAV…IAII), and 201–221 (LPSG…SLVV).

It belongs to the CDP-alcohol phosphatidyltransferase class-I family. Mn(2+) serves as cofactor.

It is found in the microsome membrane. It localises to the endoplasmic reticulum membrane. The catalysed reaction is a CDP-1,2-diacyl-sn-glycerol + sn-glycerol 3-phosphate = a 1,2-diacyl-sn-glycero-3-phospho-(1'-sn-glycero-3'-phosphate) + CMP + H(+). It functions in the pathway phospholipid metabolism; phosphatidylglycerol biosynthesis; phosphatidylglycerol from CDP-diacylglycerol: step 1/2. In terms of biological role, catalyzes the committed step to the synthesis of the acidic phospholipids, including phosphatidylglycerol (PG). Together with PGPS1, required for the proper embryo development by providing PG accurate levels. This is CDP-diacylglycerol--glycerol-3-phosphate 3-phosphatidyltransferase 2 from Arabidopsis thaliana (Mouse-ear cress).